A 354-amino-acid polypeptide reads, in one-letter code: MQIAVLLSGGVDSSVALYIMIQKGYKNIKCYYLKIWLEDELSYIGECPWKEDINYVEAVCKKFNVPYEIISLQDEYYKRVVTYAIEELKIGNTPSPDIFCNQRIKFGAFFDKINEHYDLIVTGHYAKIENKNDHYILKQAKDKIKDQSYFLSHLSRKQISKLHFPLGDLLKTEIRQIAQKIDLPNKNRKDSQGICFLGKIKYDEFIKYHLGELKGNIIEQETGKILGTHNGYWFFTIGQRKGIKLSHGPWFVTEKDIQNNIIYISNSINYLKQGKQQFLVHKTNWINKPLNNGDLSAKIRHGEKKIKCKIEMLKNDIIKVDLEEKDYGISPGQFCIFYQEDECLGGAKILKTLT.

ATP is bound by residues 6–13 (LLSGGVDS) and Leu33. Cys100 (nucleophile) is an active-site residue. Cysteines 100 and 195 form a disulfide. An ATP-binding site is contributed by Gly123. The interval 145–147 (KDQ) is interaction with tRNA. Cys195 serves as the catalytic Cysteine persulfide intermediate.

Belongs to the MnmA/TRMU family.

The protein resides in the cytoplasm. It carries out the reaction S-sulfanyl-L-cysteinyl-[protein] + uridine(34) in tRNA + AH2 + ATP = 2-thiouridine(34) in tRNA + L-cysteinyl-[protein] + A + AMP + diphosphate + H(+). In terms of biological role, catalyzes the 2-thiolation of uridine at the wobble position (U34) of tRNA, leading to the formation of s(2)U34. This is tRNA-specific 2-thiouridylase MnmA from Borrelia turicatae (strain 91E135).